We begin with the raw amino-acid sequence, 548 residues long: Chaperonin GroEL (548 aa).

Residues 29–32 (TLGP), Lys50, 86–90 (DGTTT), Gly414, 478–480 (NAA), and Asp494 contribute to the ATP site.

The protein belongs to the chaperonin (HSP60) family. Forms a cylinder of 14 subunits composed of two heptameric rings stacked back-to-back. Interacts with the co-chaperonin GroES.

It is found in the cytoplasm. It carries out the reaction ATP + H2O + a folded polypeptide = ADP + phosphate + an unfolded polypeptide.. Together with its co-chaperonin GroES, plays an essential role in assisting protein folding. The GroEL-GroES system forms a nano-cage that allows encapsulation of the non-native substrate proteins and provides a physical environment optimized to promote and accelerate protein folding. This Psychrobacter sp. (strain PRwf-1) protein is Chaperonin GroEL.